The following is a 207-amino-acid chain: ATP-dependent Clp protease proteolytic subunit 1 (207 aa).

S103 acts as the Nucleophile in catalysis. Residue H128 is part of the active site.

Belongs to the peptidase S14 family. Fourteen ClpP subunits assemble into 2 heptameric rings which stack back to back to give a disk-like structure with a central cavity, resembling the structure of eukaryotic proteasomes.

It is found in the cytoplasm. It carries out the reaction Hydrolysis of proteins to small peptides in the presence of ATP and magnesium. alpha-casein is the usual test substrate. In the absence of ATP, only oligopeptides shorter than five residues are hydrolyzed (such as succinyl-Leu-Tyr-|-NHMec, and Leu-Tyr-Leu-|-Tyr-Trp, in which cleavage of the -Tyr-|-Leu- and -Tyr-|-Trp bonds also occurs).. Cleaves peptides in various proteins in a process that requires ATP hydrolysis. Has a chymotrypsin-like activity. Plays a major role in the degradation of misfolded proteins. The chain is ATP-dependent Clp protease proteolytic subunit 1 from Tropheryma whipplei (strain Twist) (Whipple's bacillus).